The primary structure comprises 472 residues: Dihydrolipoyl dehydrogenase 2 (472 aa).

Residues 39 to 47 (ERDAYGGTC), Lys-56, and Ala-118 contribute to the FAD site. Cys-47 and Cys-52 are joined by a disulfide. NAD(+)-binding positions include 186–190 (GAGYI), Glu-209, and 275–278 (AVGR). FAD is bound by residues Asp-318 and Ala-326. His-450 acts as the Proton acceptor in catalysis.

This sequence belongs to the class-I pyridine nucleotide-disulfide oxidoreductase family. Homodimer. The cofactor is FAD.

Its subcellular location is the cytoplasm. It carries out the reaction N(6)-[(R)-dihydrolipoyl]-L-lysyl-[protein] + NAD(+) = N(6)-[(R)-lipoyl]-L-lysyl-[protein] + NADH + H(+). The sequence is that of Dihydrolipoyl dehydrogenase 2 (lpdA2) from Haloarcula marismortui (strain ATCC 43049 / DSM 3752 / JCM 8966 / VKM B-1809) (Halobacterium marismortui).